Consider the following 434-residue polypeptide: Putative ankyrin repeat protein FPV219 (434 aa).

ANK repeat units lie at residues 33–62 (DDLSPLHHAVSRGYKEIVISMLEHGADVNL), 66–95 (EVCSPLHIAIKNDNVEMVQLLIDNGADTDC), 101–131 (HGTPLQCAILNENYRITDALLESGADTHEIY), 132–161 (TKNHPIIEAIKLDNLPLVRLLLRHGADVNT), 165–195 (LYGYPIHLAIRYGNIDIIKELLYHGVIESYS), 196–225 (LYPSLLHQSIMCNNKEVVLLLISMGFDVNA), and 229–258 (EGNTPMHLAVQKNLVGIVKILLDKGADTSI).

The protein is Putative ankyrin repeat protein FPV219 of Fowlpox virus (strain NVSL) (FPV).